Here is a 1221-residue protein sequence, read N- to C-terminus: Reverse gyrase subunit B (1221 aa).

The RG N-terminal-type zinc-finger motif lies at 56–97; the sequence is NEPVAIFGSSCVLCGGDCSSVRLTSRIGICERCLPVDTETLR. Zn(2+) is bound by residues cysteine 66, cysteine 69, cysteine 85, and cysteine 88. ATP is bound by residues glutamine 161 and 178 to 185; that span reads APTGTGKT. The region spanning 165-400 is the Helicase ATP-binding domain; the sequence is TRRLVKGCSF…AVVRELFDFE (236 aa). Positions 284–287 match the DEAD box motif; it reads DDVD. Residues 424–600 enclose the Helicase C-terminal domain; the sequence is AVERIVRKAG…PLSLNTLMKL (177 aa). Residues 779 to 935 form the Toprim domain; the sequence is SALMIVESPN…QVYRTEFHEV (157 aa). Residue glutamate 785 participates in Mg(2+) binding. Residues 856–882 form an RG C-terminal-type zinc finger; that stretch reads LGRCSECGEQVVGSEECPNCGGEVELK. Cysteine 859, cysteine 862, cysteine 872, and cysteine 875 together coordinate Zn(2+). Mg(2+) is bound at residue aspartate 904. Positions 953-1221 constitute a Topo IA-type catalytic domain; that stretch reads DAGRVSAQIL…MLHLAGVSGR (269 aa).

It in the C-terminal section; belongs to the type IA topoisomerase family. In the N-terminal section; belongs to the DEAD box helicase family. DDVD subfamily. As to quaternary structure, heterodimer of an RgyrA and RgyrB subunit. The topoisomerase domain is shared between the two subunits. It depends on Zn(2+) as a cofactor. The cofactor is Mg(2+). In terms of processing, the N-terminus is partially blocked.

It is found in the cytoplasm. It carries out the reaction ATP + H2O = ADP + phosphate + H(+). Modifies the topological state of DNA by introducing positive supercoils in an ATP-dependent process; dATP also allows positive supercoiling. Increases the linking number in steps of +1. Only this subunit binds ATP, it does so in a DNA- and RgyA-independent manner. Hydrolyzes ATP only in the presence of DNA. The RgyA subunit transiently cleaves a single DNA strand and remains covalently bound to the 5' DNA end probably through a tyrosine residue. It changes linking number in steps of one, and nicks DNA preferentially at 5'-CNNN | 3'-sites with a strong preference for 4 pyrimidine residues. There are about 1000 heterodimers per cell. May be involved in rewinding the DNA strands in the regions of the chromosome that have opened up to allow transcription or replication. Its function is as follows. This subunit expressed in E.coli only has DNA-dependent ATPase activity at 80 degrees Celsius. Reverse gyrase activity is reconstituted after incubation at 80 degrees Celsius for 5 minutes, positive supercoiling requires ATP and Mg(2+). In the presence of ATP it binds and nicks substrate but does not make closed product. The chain is Reverse gyrase subunit B from Methanopyrus kandleri (strain AV19 / DSM 6324 / JCM 9639 / NBRC 100938).